The chain runs to 619 residues: Enolase 4 (619 aa).

A compositionally biased stretch (basic and acidic residues) spans 173–184 (DKERKELEKSQE). Residues 173–236 (DKERKELEKS…PPEPPEPVLH (64 aa)) form a disordered region. Positions 188–206 (PAPPPVTLPPPPPPPPPPP) are enriched in pro residues. Position 302 (E302) interacts with substrate. Residues 333–354 (TLPPPKQETKKGHNGSKRAQPP) form a disordered region. The Proton acceptor role is filled by K497. Residue K548 coordinates substrate.

This sequence belongs to the enolase family. As to quaternary structure, interacts with ENO1. Isoform 1 and isoform 4 interact with AKAP4. In terms of processing, synthesized as an approximately 70-kDa precursor, which then undergoes proteolytic cleavage to an approximately 60-kDa enzyme; HOATZ associates directly or indirectly with ENO4 to mediate this process before its transport to mature flagella. As to expression, testis-specific. Expressed in spermatids and ependyma (at protein level). Expressed at higher levels in late spermatids than in pachytene spermatocytes. In terms of tissue distribution, expressed at higher levels in pachytene spermatocytes than in late spermatids.

The enzyme catalyses (2R)-2-phosphoglycerate = phosphoenolpyruvate + H2O. It participates in carbohydrate degradation; glycolysis; pyruvate from D-glyceraldehyde 3-phosphate: step 4/5. Its function is as follows. Required for sperm motility, function and male fertility. May be involved in the normal assembly of the sperm fibrous sheath and provides most of the enolase activity in sperm. This is Enolase 4 (Eno4) from Mus musculus (Mouse).